A 459-amino-acid polypeptide reads, in one-letter code: Putative peroxisome assembly protein 12 (459 aa).

At 1–16 the chain is on the peroxisomal matrix side; it reads MFMFNFDNGHDPNRPS. Residues 17-44 traverse the membrane as a helical segment; that stretch reads FFEMLNQHQMMPSFKPALKYIFTVLSQR. Residues 45–47 lie on the Cytoplasmic side of the membrane; it reads NPK. A helical membrane pass occupies residues 48–72; sequence FRYIVNYYDECFYSLLLLLEYHYLK. Over 73–158 the chain is Peroxisomal matrix; sequence YYEGSFSENF…AKDDLNTMIQ (86 aa). The helical transmembrane segment at 159-196 threads the bilayer; sequence DSDRKESLIYLVLIPYFKGKLDEYYKKESDPLAELGLV. Topologically, residues 197 to 248 are cytoplasmic; sequence SSDNNNNNNDNINDQIQQLEEQIQQQQTIVNGNNNSNNNNKKLKIKFLILIR. The chain crosses the membrane as a helical span at residues 249–287; that stretch reads FLKGSKTLKKLKTIFLKVYPFISAIYEALFFIYQLLYLY. Topologically, residues 288–355 are peroxisomal matrix; that stretch reads EYTNYYTPFF…LDSILDYSKY (68 aa). The chain crosses the membrane as a helical span at residues 356 to 380; sequence ILPLSVFIFKSLEWWYSENRISAPT. The Cytoplasmic portion of the chain corresponds to 381–459; sequence LPIPTPPTPS…EQLRKIYETV (79 aa). Zn(2+) contacts are provided by Cys406, Cys409, Cys426, and Cys429. The RING-type; degenerate zinc finger occupies 406-444; it reads CPLCLKERTNPTICGSGFVFCYPCIFGYVNEHSKCPITF.

It belongs to the pex2/pex10/pex12 family. As to quaternary structure, component of the PEX2-PEX10-PEX12 retrotranslocation channel.

It localises to the peroxisome membrane. It functions in the pathway protein modification; protein ubiquitination. Its function is as follows. Component of a retrotranslocation channel required for peroxisome organization by mediating export of the PEX5 receptor from peroxisomes to the cytosol, thereby promoting PEX5 recycling. The retrotranslocation channel is composed of PEX2, PEX10 and PEX12; each subunit contributing transmembrane segments that coassemble into an open channel that specifically allows the passage of PEX5 through the peroxisomal membrane. PEX12 also regulates PEX5 recycling by activating the E3 ubiquitin-protein ligase activity of PEX10. When PEX5 recycling is compromised, PEX12 stimulates PEX10-mediated polyubiquitination of PEX5, leading to its subsequent degradation. This is Putative peroxisome assembly protein 12 (pex12) from Dictyostelium discoideum (Social amoeba).